A 691-amino-acid polypeptide reads, in one-letter code: Elongation factor G (691 aa).

A tr-type G domain is found at 12-286 (KKLRNIGIMA…GVLEYLPSPL (275 aa)). GTP contacts are provided by residues 21–28 (AHIDAGKT), 85–89 (DTPGH), and 139–142 (NKMD).

This sequence belongs to the TRAFAC class translation factor GTPase superfamily. Classic translation factor GTPase family. EF-G/EF-2 subfamily.

The protein localises to the cytoplasm. In terms of biological role, catalyzes the GTP-dependent ribosomal translocation step during translation elongation. During this step, the ribosome changes from the pre-translocational (PRE) to the post-translocational (POST) state as the newly formed A-site-bound peptidyl-tRNA and P-site-bound deacylated tRNA move to the P and E sites, respectively. Catalyzes the coordinated movement of the two tRNA molecules, the mRNA and conformational changes in the ribosome. This chain is Elongation factor G, found in Thermosipho melanesiensis (strain DSM 12029 / CIP 104789 / BI429).